Here is a 327-residue protein sequence, read N- to C-terminus: Phenylalanine--tRNA ligase alpha subunit (327 aa).

Glu252 contacts Mg(2+).

This sequence belongs to the class-II aminoacyl-tRNA synthetase family. Phe-tRNA synthetase alpha subunit type 1 subfamily. Tetramer of two alpha and two beta subunits. Mg(2+) is required as a cofactor.

The protein localises to the cytoplasm. It catalyses the reaction tRNA(Phe) + L-phenylalanine + ATP = L-phenylalanyl-tRNA(Phe) + AMP + diphosphate + H(+). This is Phenylalanine--tRNA ligase alpha subunit from Serratia proteamaculans (strain 568).